The primary structure comprises 228 residues: FtsZ-localized protein A (228 aa).

The region spanning 3 to 85 (VERTLHHFPL…HIEETETEPP (83 aa)) is the GST N-terminal domain. Residues 90–223 (DPAERAEARR…WPGLAPAAHY (134 aa)) form the GST C-terminal domain.

It belongs to the GST superfamily. As to quaternary structure, homodimer. Interacts with FtsZ filaments. Probably interacts with the GTPase domain of FtsZ.

It is found in the cytoplasm. Functionally, essential cell division protein that must bind to FtsZ for division to occur. Critical coordinator of envelope constriction through its interaction with FtsZ. Promotes the formation of highly curved FtsZ filaments, reduces the GTPase activity of FtsZ and stabilizes FtsZ polymers. May regulate FtsZ function by modulating its superstructure. Does not bind to glutathione. The chain is FtsZ-localized protein A from Caulobacter vibrioides (strain NA1000 / CB15N) (Caulobacter crescentus).